The chain runs to 253 residues: 5-oxoprolinase subunit A (253 aa).

It belongs to the LamB/PxpA family. Forms a complex composed of PxpA, PxpB and PxpC.

It carries out the reaction 5-oxo-L-proline + ATP + 2 H2O = L-glutamate + ADP + phosphate + H(+). Functionally, catalyzes the cleavage of 5-oxoproline to form L-glutamate coupled to the hydrolysis of ATP to ADP and inorganic phosphate. This is 5-oxoprolinase subunit A from Bacillus cereus (strain B4264).